Here is a 208-residue protein sequence, read N- to C-terminus: N-(5'-phosphoribosyl)anthranilate isomerase (208 aa).

It belongs to the TrpF family.

The catalysed reaction is N-(5-phospho-beta-D-ribosyl)anthranilate = 1-(2-carboxyphenylamino)-1-deoxy-D-ribulose 5-phosphate. It participates in amino-acid biosynthesis; L-tryptophan biosynthesis; L-tryptophan from chorismate: step 3/5. The protein is N-(5'-phosphoribosyl)anthranilate isomerase of Staphylococcus haemolyticus (strain JCSC1435).